The primary structure comprises 267 residues: Tryptophan synthase alpha chain (267 aa).

Active-site proton acceptor residues include E47 and D58.

Belongs to the TrpA family. In terms of assembly, tetramer of two alpha and two beta chains.

The enzyme catalyses (1S,2R)-1-C-(indol-3-yl)glycerol 3-phosphate + L-serine = D-glyceraldehyde 3-phosphate + L-tryptophan + H2O. The protein operates within amino-acid biosynthesis; L-tryptophan biosynthesis; L-tryptophan from chorismate: step 5/5. Functionally, the alpha subunit is responsible for the aldol cleavage of indoleglycerol phosphate to indole and glyceraldehyde 3-phosphate. The sequence is that of Tryptophan synthase alpha chain from Chlorobaculum parvum (strain DSM 263 / NCIMB 8327) (Chlorobium vibrioforme subsp. thiosulfatophilum).